A 1464-amino-acid polypeptide reads, in one-letter code: DNA polymerase III PolC-type (1464 aa).

In terms of domain architecture, Exonuclease spans 426-582; sequence YVVFDVETTG…YDAEATGRLL (157 aa).

This sequence belongs to the DNA polymerase type-C family. PolC subfamily.

The protein resides in the cytoplasm. It carries out the reaction DNA(n) + a 2'-deoxyribonucleoside 5'-triphosphate = DNA(n+1) + diphosphate. Its function is as follows. Required for replicative DNA synthesis. This DNA polymerase also exhibits 3' to 5' exonuclease activity. This is DNA polymerase III PolC-type from Streptococcus thermophilus (strain ATCC BAA-250 / LMG 18311).